A 1100-amino-acid chain; its full sequence is Sorbin and SH3 domain-containing protein 2 (1100 aa).

Phosphoserine is present on residues Y13, S14, H27, G28, S30, and S43. Residues 30–52 show a composition bias toward polar residues; sequence SLDSTDTYPQHAQSLDGTTSSSI. A disordered region spans residues 30–57; sequence SLDSTDTYPQHAQSLDGTTSSSIPLYRS. The SoHo domain maps to 66-127; it reads VIKAPHYPGI…YNTPYTYNAG (62 aa). Polar residues predominate over residues 134 to 147; that stretch reads SAQSHPAAKTQTYR. A disordered region spans residues 134-311; the sequence is SAQSHPAAKT…SPSRAKGGDD (178 aa). H153 is subject to Alanine amide. Phosphoserine occurs at positions 154 and 157. Residues 167–180 show a composition bias toward pro residues; sequence PVPPPHVPPPVPPL. The segment covering 181–217 has biased composition (basic and acidic residues); that stretch reads RPRDRSSTEKHDWDPPDRKVDTRKFRSEPRSIFEYEP. S234 and I236 each carry phosphothreonine. S239, S245, S248, K258, S259, and E260 each carry phosphoserine. A phosphothreonine mark is found at T277, G280, and V282. S287 is modified (phosphoserine). The span at 287-304 shows a compositional bias: low complexity; it reads SSTTLTKSFTSSSPSSPS. T292 is modified (phosphothreonine). Phosphoserine is present on residues F295, S297, S298, S299, S301, S302, S304, A306, D311, and P316. S320, S322, and G326 each carry phosphothreonine. Residues H341, V344, and R346 each carry the phosphoserine modification. E366 carries the phosphothreonine modification. Phosphoserine is present on residues S381 and S383. 2 positions are modified to phosphothreonine: D413 and K415. Residues R437 and R439 each carry the phosphoserine modification. The residue at position 459 (I459) is a Phosphothreonine. K474, S494, S497, S550, and S750 each carry phosphoserine. The tract at residues 807–866 is disordered; that stretch reads RMPRSASFQDVDTANSSCHHQDRGGALQDRESPRSYSSTLTDMGRSAPRERRGTPEKEKL. The span at 812–824 shows a compositional bias: polar residues; that stretch reads ASFQDVDTANSSC. The segment covering 825-839 has biased composition (basic and acidic residues); the sequence is HHQDRGGALQDRESP. S843 carries the phosphoserine modification. The segment covering 853-866 has biased composition (basic and acidic residues); it reads APRERRGTPEKEKL. SH3 domains are found at residues 863–922 and 938–999; these read KEKL…KLTP and GEIG…VVKK. Residues S1017 and S1023 each carry the phosphoserine modification. The SH3 3 domain occupies 1041 to 1100; the sequence is GGGEPFQALYNYTPRNEDELELRESDVIDVMEKCDDGWFVGTSRRTKFFGTFPGNYVKRL.

Interacts with ABL, CBL, DNM1, DNM2, FLOT1, AFDN, PTK2B/PYK2, SAPAP, SPTAN1, SYNJ1, SYNJ2, VCL/vinculin and WASF. Interacts with ABL1/c-Abl, ABL2/v-Abl/Arg, ACTN, CBL and PALLD. Interacts with PTPN12 and WASF1 via its SH3 domains; this interaction may mediate the partial PTPN12 and WASF1 translocation to focal adhesion sites. Ubiquitinated by CBL. Post-translationally, dephosphorylated by PTPN12. Abundantly expressed in heart. In cardiac muscle cells, located in the Z-disks of sarcomere. Also found, but to a lower extent, in small and large intestine, pancreas, thymus, colon, spleen, prostate, testis, brain, ovary and epithelial cells. In the pancreas, mainly expressed in acinar cells, duct cells and all cell types in islets (at protein level). Tends to be down-regulated in pancreatic adenocarcinomas ans metastases.

It is found in the cytoplasm. Its subcellular location is the perinuclear region. The protein localises to the apical cell membrane. The protein resides in the cell junction. It localises to the focal adhesion. It is found in the cell projection. Its subcellular location is the lamellipodium. Its function is as follows. Adapter protein that plays a role in the assembling of signaling complexes, being a link between ABL kinases and actin cytoskeleton. Can form complex with ABL1 and CBL, thus promoting ubiquitination and degradation of ABL1. May play a role in the regulation of pancreatic cell adhesion, possibly by acting on WASF1 phosphorylation, enhancing phosphorylation by ABL1, as well as dephosphorylation by PTPN12. Isoform 6 increases water and sodium absorption in the intestine and gall-bladder. The chain is Sorbin and SH3 domain-containing protein 2 (SORBS2) from Homo sapiens (Human).